Consider the following 323-residue polypeptide: MTKTKIIFMGTPQFAATVLKGLIDSNQYEILAVVTQPDRKVGRKQELRMTPVKELALTVNLPVLQPEKLSGSVEMTQIMTLLESGEVGIVTAAFGQFLPGKLLDVARFAVNTHASLLPKYRGGAPIHYAIMNGEKEAGVTIMEMIRKMDAGDMIAQNSTPILEEDNVGTMFEKLAFVGRDLLLETLPKYLEGQLKAQAQNEDEVTFSPNISPEEEKIDWNKSAREIFNKVRGMNPFPVAHTLWNGERFKIYESKVADEIVNNSDNPLQAGQIVEKTKKSLKVATGNGILELLTVQPAGKPKMDIVSFLNGLGQKMQVGDKLGD.

115–118 (SLLP) serves as a coordination point for (6S)-5,6,7,8-tetrahydrofolate.

Belongs to the Fmt family.

It carries out the reaction L-methionyl-tRNA(fMet) + (6R)-10-formyltetrahydrofolate = N-formyl-L-methionyl-tRNA(fMet) + (6S)-5,6,7,8-tetrahydrofolate + H(+). Its function is as follows. Attaches a formyl group to the free amino group of methionyl-tRNA(fMet). The formyl group appears to play a dual role in the initiator identity of N-formylmethionyl-tRNA by promoting its recognition by IF2 and preventing the misappropriation of this tRNA by the elongation apparatus. This is Methionyl-tRNA formyltransferase from Lactococcus lactis subsp. cremoris (strain SK11).